A 244-amino-acid polypeptide reads, in one-letter code: MTLDLDANKKDDKLLLTTIQQEYKILAEYKMIESEKLSGIYVIPSYANSLQWFGVFFGRQGFYTESVFRFTILLPDRFPDDKSLPTIIFQQDVIHPHVCPYTHGLDVSHAFPEWRCGEDHLWQLLKYLQTIFSDPLDSIRGIELDKLKDSEAAELLMTNKEEYVARVQKNIKESKEHIFDTPPTEDPHYIVFEKFQQDVHGPVLERIKAGRSKQTEPSAQQANGGHATGLSWVKEGEFKPLSIE.

In terms of domain architecture, UBC core spans 20-176 (QQEYKILAEY…VQKNIKESKE (157 aa)). The disordered stretch occupies residues 209 to 244 (AGRSKQTEPSAQQANGGHATGLSWVKEGEFKPLSIE).

Belongs to the ubiquitin-conjugating enzyme family. FTS subfamily.

This Drosophila erecta (Fruit fly) protein is Protein crossbronx (cbx).